The following is a 108-amino-acid chain: Small ribosomal subunit protein eS25x (108 aa).

The tract at residues 1-36 (MAPKKDKVPPPSSKPAKSGGGKQKKKKWSKGKQKEK) is disordered. The segment covering 22-31 (KQKKKKWSKG) has biased composition (basic residues).

The protein belongs to the eukaryotic ribosomal protein eS25 family.

This is Small ribosomal subunit protein eS25x (RPS25D) from Arabidopsis thaliana (Mouse-ear cress).